The chain runs to 275 residues: Transmembrane protein 202 (275 aa).

Transmembrane regions (helical) follow at residues 60 to 80 (SGFSVLLLACTSPLNLVQFLV), 116 to 136 (ALFLISILFMLISLGLLLSSC), 151 to 171 (VSMLSFCSAVSLLLCLNLFLA), and 193 to 213 (WCSEVLYICVGIISFLNFITF).

Its subcellular location is the membrane. This is Transmembrane protein 202 (Tmem202) from Mus musculus (Mouse).